The primary structure comprises 286 residues: Light-independent protochlorophyllide reductase iron-sulfur ATP-binding protein (286 aa).

Residues 10–15 (GIGKST) and lysine 39 contribute to the ATP site. Residue serine 14 participates in Mg(2+) binding. Cysteine 95 and cysteine 129 together coordinate [4Fe-4S] cluster. 180-181 (NR) provides a ligand contact to ATP.

The protein belongs to the NifH/BchL/ChlL family. As to quaternary structure, homodimer. Protochlorophyllide reductase is composed of three subunits; ChlL, ChlN and ChlB. [4Fe-4S] cluster is required as a cofactor.

It catalyses the reaction chlorophyllide a + oxidized 2[4Fe-4S]-[ferredoxin] + 2 ADP + 2 phosphate = protochlorophyllide a + reduced 2[4Fe-4S]-[ferredoxin] + 2 ATP + 2 H2O. It participates in porphyrin-containing compound metabolism; chlorophyll biosynthesis (light-independent). Component of the dark-operative protochlorophyllide reductase (DPOR) that uses Mg-ATP and reduced ferredoxin to reduce ring D of protochlorophyllide (Pchlide) to form chlorophyllide a (Chlide). This reaction is light-independent. The L component serves as a unique electron donor to the NB-component of the complex, and binds Mg-ATP. In Cyanothece sp. (strain PCC 7425 / ATCC 29141), this protein is Light-independent protochlorophyllide reductase iron-sulfur ATP-binding protein.